A 154-amino-acid chain; its full sequence is Protein X (154 aa).

Residues 68 to 117 are mitochondrial targeting sequence; the sequence is PCALRFTSARRMETTVNAHQILPKVLHKRTLGLSAMSTTDLEAYFKDCLF.

This sequence belongs to the orthohepadnavirus protein X family. May form homodimer. May interact with host CEBPA, CFLAR, CREB1, DDB1, E4F1, HBXIP, HSPD1/HSP60, NFKBIA, POLR2E and SMAD4. Interacts with host SMC5-SMC6 complex and induces its degradation. Interacts with host TRPC4AP; leading to prevent ubiquitination of TRPC4AP. Interacts with host PLSCR1; this interaction promotes ubiquitination and degradation of HBx and impairs HBx-mediated cell proliferation. A fraction may be phosphorylated in insect cells and HepG2 cells, a human hepatoblastoma cell line. Phosphorylated in vitro by host protein kinase C or mitogen-activated protein kinase. N-acetylated in insect cells.

Its subcellular location is the host cytoplasm. The protein resides in the host nucleus. It localises to the host mitochondrion. Its function is as follows. Multifunctional protein that plays a role in silencing host antiviral defenses and promoting viral transcription. Does not seem to be essential for HBV infection. May be directly involved in development of cirrhosis and liver cancer (hepatocellular carcinoma). Most of cytosolic activities involve modulation of cytosolic calcium. The effect on apoptosis is controversial depending on the cell types in which the studies have been conducted. May induce apoptosis by localizing in mitochondria and causing loss of mitochondrial membrane potential. May also modulate apoptosis by binding host CFLAR, a key regulator of the death-inducing signaling complex (DISC). Promotes viral transcription by using the host E3 ubiquitin ligase DDB1 to target the SMC5-SMC6 complex to proteasomal degradation. This host complex would otherwise bind to viral episomal DNA, and prevents its transcription. Moderately stimulates transcription of many different viral and cellular transcription elements. Promoters and enhancers stimulated by HBx contain DNA binding sites for NF-kappa-B, AP-1, AP-2, c-EBP, ATF/CREB, or the calcium-activated factor NF-AT. The sequence is that of Protein X from Hepatitis B virus genotype D subtype ayw (isolate France/Tiollais/1979) (HBV-D).